A 133-amino-acid chain; its full sequence is Agouti-signaling protein (133 aa).

A signal peptide spans 1 to 22 (MDVIHLFLATLLVSLCFLTAYS). A compositionally biased stretch (basic and acidic residues) spans 26-36 (PEEKPKDDRSL). The segment at 26–83 (PEEKPKDDRSLRNNSSMNLLDSPSVSIMALNKKSKKISRKEAEKKKRSSKKKASMTKV) is disordered. Residues 37-50 (RNNSSMNLLDSPSV) show a composition bias toward polar residues. 2 N-linked (GlcNAc...) asparagine glycosylation sites follow: asparagine 38 and asparagine 39. Positions 70-79 (KKRSSKKKAS) are enriched in basic residues. 5 disulfides stabilise this stretch: cysteine 94–cysteine 109, cysteine 101–cysteine 115, cysteine 108–cysteine 126, cysteine 112–cysteine 133, and cysteine 117–cysteine 124. The 40-residue stretch at 94–133 (CVATRDSCKPPAPACCDPCASCQCRFFRSACSCRVLTRTC) folds into the Agouti domain.

Its subcellular location is the secreted. Functionally, involved in the regulation of melanogenesis. The binding of ASP to MC1R precludes alpha-MSH initiated signaling and thus blocks production of cAMP, leading to a down-regulation of eumelanogenesis (brown/black pigment) and thus increasing synthesis of pheomelanin (yellow/red pigment). This is Agouti-signaling protein (ASIP) from Equus caballus (Horse).